We begin with the raw amino-acid sequence, 293 residues long: Germ cell-specific gene 1-like protein 2 (293 aa).

Over 1-8 (MDRAKQQQ) the chain is Cytoplasmic. A helical transmembrane segment spans residues 9–29 (ALLLLPVCLALTFSLTAVVSS). Residues 30 to 120 (HWCEGTRRVV…RSVVPAEEQG (91 aa)) are Extracellular-facing. N-linked (GlcNAc...) asparagine glycosylation is found at N59 and N67. The chain crosses the membrane as a helical span at residues 121-141 (VLWLSIGGEVLDIVLILTSAI). Topologically, residues 142–160 (LLGSRVSCRSPGFHWLRVD) are cytoplasmic. A helical membrane pass occupies residues 161–181 (ALVAIFMVLAGLLGMVAHMMY). The Extracellular portion of the chain corresponds to 182–204 (TTIFQITVNLGPEDWKPQTWDYG). Residues 205 to 225 (WSYCLAWGSFALCLAVSVSAM) form a helical membrane-spanning segment. Over 226 to 293 (SRFTAARLEF…PGAPGKVSIC (68 aa)) the chain is Cytoplasmic.

This sequence belongs to the GSG1 family.

It localises to the membrane. In Homo sapiens (Human), this protein is Germ cell-specific gene 1-like protein 2.